We begin with the raw amino-acid sequence, 76 residues long: Theta defensin subunit B (76 aa).

A signal peptide spans M1–A22. Positions R23–L64 are excised as a propeptide. Positions Q24–A54 are disordered. Positions A30–A44 are enriched in low complexity. R65 participates in a covalent cross-link: Cyclopeptide (Arg-Cys) (interchain with C-73 in subunit A); in form BTD-1. Residue R65 forms a Cyclopeptide (Arg-Cys) (interchain with C-73 in subunit B); in form BTD-2 linkage. C68 and C73 are joined by a disulfide. C73 participates in a covalent cross-link: Cyclopeptide (Cys-Arg) (interchain with R-65 in subunit A); in form BTD-1. Residue C73 forms a Cyclopeptide (Cys-Arg) (interchain with R-65 in subunit B); in form BTD-2 linkage. A propeptide spanning residues Q74–L76 is cleaved from the precursor.

The protein belongs to the alpha-defensin family. Theta subfamily. BTD-1 is a cyclic heterodimer composed of subunits A and B; disulfide-linked. BTD-2 is a cyclic homodimer composed of two subunits B; disulfide-linked. Forms a cyclic peptide with subunit A (BTD-1), or subunit B (BTD-2). An additional intersubunit disulfide bond is formed.

Its function is as follows. BTD-1 and BTD-2 have antimicrobial activity against the Gram-negative bacterium E.coli ML35, the Gram-positive bacterium S.aureus 502a, and the fungus C.albicans 16820. BTD-2 is more effective against E.coli than BTD-1. This is Theta defensin subunit B (BTDB) from Papio anubis (Olive baboon).